The primary structure comprises 450 residues: Sensor histidine kinase EnvZ (450 aa).

Over 1–15 (MRRMRFSPRSSFART) the chain is Cytoplasmic. A helical transmembrane segment spans residues 16 to 35 (LLLIVTLLFVSLVTTYLVVL). Residues 36 to 158 (NFAILPSLQQ…LTEIHQGDFS (123 aa)) are Periplasmic-facing. A helical membrane pass occupies residues 159-179 (PLFRYTLAIMLLAIGGAWLFI). Residues 180–232 (RIQNRPLVDLEHAALQVGKGIIPPPLREYGASEVRSVTRAFNHMAAGVKQLAD) enclose the HAMP domain. Residues 180–450 (RIQNRPLVDL…ARVQGTTKEA (271 aa)) lie on the Cytoplasmic side of the membrane. The tract at residues 223–289 (MAAGVKQLAD…IIEQFIDYLR (67 aa)) is cytoplasmic dimerization domain (CDD), when dimerized forms osmosensitive core. The region spanning 240–440 (GVSHDLRTPL…SIRAWLPVPV (201 aa)) is the Histidine kinase domain. Residues H243, 347–351 (NAARY), D373, 392–393 (RG), and 402–406 (TGLGL) each bind ATP. At H243 the chain carries Phosphohistidine; by autocatalysis.

Homodimer. Autophosphorylated.

Its subcellular location is the cell inner membrane. It carries out the reaction ATP + protein L-histidine = ADP + protein N-phospho-L-histidine.. Functionally, member of the two-component regulatory system EnvZ/OmpR involved in regulating expression of the outer membrane porins OmpC and OmpF as well as other genes. Unlike E.coli or S.typhimurium both porins are expressed constitutively. Involved in regulation of the biosynthesis of Vi polysaccharide, a capsular antigen thought to be involved in the virulence of S.typhi. Vi antigen is synthesized at low NaCl concentrations (under 0.4 M). EnvZ functions as a membrane-associated protein kinase that phosphorylates OmpR in response to environmental signals. The chain is Sensor histidine kinase EnvZ (envZ) from Salmonella typhi.